A 773-amino-acid polypeptide reads, in one-letter code: Linolenate 9R-lipoxygenase (773 aa).

The 598-residue stretch at 176–773 (YEWVDSKKKS…LEDLMMSINI (598 aa)) folds into the Lipoxygenase domain. The Fe cation site is built by His-515, His-520, and Ile-773.

This sequence belongs to the lipoxygenase family.

The enzyme catalyses (9Z,12Z,15Z)-octadecatrienoate + O2 = (9R,10E,12Z,15Z)-9-hydroperoxyoctadeca-10,12,15-trienoate. It functions in the pathway lipid metabolism; oxylipin biosynthesis. In terms of biological role, catalyzes the conversion of alpha-linoleate to (9R,10E,12Z,15Z)-9-hydroperoxyoctadeca-10,12,15-trienoate in oxylipin biosynthesis. Also converts alpha-linoleate to (9R,10E,12Z)-9-hydroperoxyoctadeca-10,12-dienoate. This Nostoc sp. (strain PCC 7120 / SAG 25.82 / UTEX 2576) protein is Linolenate 9R-lipoxygenase.